A 235-amino-acid chain; its full sequence is Endonuclease V (235 aa).

Residues Asp-45 and Asp-115 each contribute to the Mg(2+) site.

This sequence belongs to the endonuclease V family. Mg(2+) serves as cofactor.

The protein resides in the cytoplasm. It carries out the reaction Endonucleolytic cleavage at apurinic or apyrimidinic sites to products with a 5'-phosphate.. Its function is as follows. DNA repair enzyme involved in the repair of deaminated bases. Selectively cleaves double-stranded DNA at the second phosphodiester bond 3' to a deoxyinosine leaving behind the intact lesion on the nicked DNA. This chain is Endonuclease V, found in Bacillus thuringiensis subsp. konkukian (strain 97-27).